A 572-amino-acid polypeptide reads, in one-letter code: Probable terpene synthase 13 (572 aa).

Mg(2+)-binding residues include Asp326, Asp330, and Glu478. Positions 326 to 330 (DDIFD) match the DDXXD motif motif.

The protein belongs to the terpene synthase family. Mg(2+) serves as cofactor.

In terms of biological role, probable sesquiterpene synthase. This chain is Probable terpene synthase 13 (TPS13), found in Ricinus communis (Castor bean).